The primary structure comprises 385 residues: S-adenosylmethionine synthase (385 aa).

His16 is an ATP binding site. Asp18 is a Mg(2+) binding site. Glu44 contacts K(+). Residues Glu57 and Gln100 each contribute to the L-methionine site. A flexible loop region spans residues 100–110 (QSPDINQGVDK). Residues 165–167 (DAK), 231–232 (RF), Asp240, 246–247 (RK), Ala263, and Lys267 contribute to the ATP site. An L-methionine-binding site is contributed by Asp240. An L-methionine-binding site is contributed by Lys271.

It belongs to the AdoMet synthase family. As to quaternary structure, homotetramer; dimer of dimers. Mg(2+) is required as a cofactor. K(+) serves as cofactor.

Its subcellular location is the cytoplasm. The enzyme catalyses L-methionine + ATP + H2O = S-adenosyl-L-methionine + phosphate + diphosphate. It functions in the pathway amino-acid biosynthesis; S-adenosyl-L-methionine biosynthesis; S-adenosyl-L-methionine from L-methionine: step 1/1. Catalyzes the formation of S-adenosylmethionine (AdoMet) from methionine and ATP. The overall synthetic reaction is composed of two sequential steps, AdoMet formation and the subsequent tripolyphosphate hydrolysis which occurs prior to release of AdoMet from the enzyme. This is S-adenosylmethionine synthase from Vibrio cholerae serotype O1 (strain ATCC 39315 / El Tor Inaba N16961).